A 68-amino-acid polypeptide reads, in one-letter code: DNA-directed RNA polymerase subunit Rpo10 (68 aa).

Zn(2+) contacts are provided by Cys-7, Cys-10, Cys-44, and Cys-45.

The protein belongs to the archaeal Rpo10/eukaryotic RPB10 RNA polymerase subunit family. As to quaternary structure, part of the RNA polymerase complex. It depends on Zn(2+) as a cofactor.

The protein localises to the cytoplasm. The enzyme catalyses RNA(n) + a ribonucleoside 5'-triphosphate = RNA(n+1) + diphosphate. DNA-dependent RNA polymerase (RNAP) catalyzes the transcription of DNA into RNA using the four ribonucleoside triphosphates as substrates. The sequence is that of DNA-directed RNA polymerase subunit Rpo10 from Methanococcus vannielii (strain ATCC 35089 / DSM 1224 / JCM 13029 / OCM 148 / SB).